The following is a 344-amino-acid chain: N-acetyl-gamma-glutamyl-phosphate reductase (344 aa).

Cys-150 is an active-site residue.

The protein belongs to the NAGSA dehydrogenase family. Type 1 subfamily.

The protein resides in the cytoplasm. The enzyme catalyses N-acetyl-L-glutamate 5-semialdehyde + phosphate + NADP(+) = N-acetyl-L-glutamyl 5-phosphate + NADPH + H(+). Its pathway is amino-acid biosynthesis; L-arginine biosynthesis; N(2)-acetyl-L-ornithine from L-glutamate: step 3/4. In terms of biological role, catalyzes the NADPH-dependent reduction of N-acetyl-5-glutamyl phosphate to yield N-acetyl-L-glutamate 5-semialdehyde. The polypeptide is N-acetyl-gamma-glutamyl-phosphate reductase (Pseudomonas aeruginosa (strain ATCC 15692 / DSM 22644 / CIP 104116 / JCM 14847 / LMG 12228 / 1C / PRS 101 / PAO1)).